The following is a 436-amino-acid chain: C4-dicarboxylate transport protein 2 (436 aa).

9 helical membrane-spanning segments follow: residues 14 to 34, 45 to 65, 77 to 97, 142 to 162, 198 to 218, 223 to 243, 290 to 310, 331 to 351, and 353 to 373; these read VLVA…TAVA, LIKM…IAGM, MALL…LVVV, VVGA…VLFG, PIGA…GSLV, LMLC…GGIA, VVGL…SIYL, ITLL…TGSG, and IVLA…LALI. The interval 414-436 is disordered; that stretch reads ELAGEGNASSPASDIPVGGREAV.

Belongs to the dicarboxylate/amino acid:cation symporter (DAACS) (TC 2.A.23) family.

It localises to the cell inner membrane. Responsible for the transport of dicarboxylates such as succinate, fumarate, and malate from the periplasm across the membrane. In Pseudomonas paraeruginosa (strain DSM 24068 / PA7) (Pseudomonas aeruginosa (strain PA7)), this protein is C4-dicarboxylate transport protein 2.